A 316-amino-acid chain; its full sequence is Beta-ketoacyl-[acyl-carrier-protein] synthase III (316 aa).

Active-site residues include Cys112 and His243. The segment at 244–248 (QANIR) is ACP-binding. Asn273 is a catalytic residue.

Belongs to the thiolase-like superfamily. FabH family. In terms of assembly, homodimer.

Its subcellular location is the cytoplasm. The catalysed reaction is malonyl-[ACP] + acetyl-CoA + H(+) = 3-oxobutanoyl-[ACP] + CO2 + CoA. It functions in the pathway lipid metabolism; fatty acid biosynthesis. Its function is as follows. Catalyzes the condensation reaction of fatty acid synthesis by the addition to an acyl acceptor of two carbons from malonyl-ACP. Catalyzes the first condensation reaction which initiates fatty acid synthesis and may therefore play a role in governing the total rate of fatty acid production. Possesses both acetoacetyl-ACP synthase and acetyl transacylase activities. Its substrate specificity determines the biosynthesis of branched-chain and/or straight-chain of fatty acids. The sequence is that of Beta-ketoacyl-[acyl-carrier-protein] synthase III from Actinobacillus pleuropneumoniae serotype 5b (strain L20).